The following is a 129-amino-acid chain: Small ribosomal subunit protein uS11 (129 aa).

The protein belongs to the universal ribosomal protein uS11 family. In terms of assembly, part of the 30S ribosomal subunit. Interacts with proteins S7 and S18. Binds to IF-3.

Functionally, located on the platform of the 30S subunit, it bridges several disparate RNA helices of the 16S rRNA. Forms part of the Shine-Dalgarno cleft in the 70S ribosome. The chain is Small ribosomal subunit protein uS11 from Anoxybacillus flavithermus (strain DSM 21510 / WK1).